The sequence spans 428 residues: Histidine--tRNA ligase (428 aa).

It belongs to the class-II aminoacyl-tRNA synthetase family. Homodimer.

It is found in the cytoplasm. The catalysed reaction is tRNA(His) + L-histidine + ATP = L-histidyl-tRNA(His) + AMP + diphosphate + H(+). The chain is Histidine--tRNA ligase from Chlamydia trachomatis serovar L2 (strain ATCC VR-902B / DSM 19102 / 434/Bu).